A 234-amino-acid chain; its full sequence is Endonuclease V (234 aa).

The Mg(2+) site is built by Asp46 and Asp116.

The protein belongs to the endonuclease V family. Requires Mg(2+) as cofactor.

It is found in the cytoplasm. It catalyses the reaction Endonucleolytic cleavage at apurinic or apyrimidinic sites to products with a 5'-phosphate.. In terms of biological role, DNA repair enzyme involved in the repair of deaminated bases. Selectively cleaves double-stranded DNA at the second phosphodiester bond 3' to a deoxyinosine leaving behind the intact lesion on the nicked DNA. The chain is Endonuclease V from Clostridium acetobutylicum (strain ATCC 824 / DSM 792 / JCM 1419 / IAM 19013 / LMG 5710 / NBRC 13948 / NRRL B-527 / VKM B-1787 / 2291 / W).